Here is a 341-residue protein sequence, read N- to C-terminus: Cysteine-rich repeat secretory protein 1 (341 aa).

The first 25 residues, 1-25, serve as a signal peptide directing secretion; the sequence is MFSLPLHQSKLIFLLSFLLIKTLNA. Gnk2-homologous domains follow at residues 28 to 131 and 136 to 245; these read TYLL…SRKI and DQGP…ATFL. 4 cysteine pairs are disulfide-bonded: cysteine 85–cysteine 94, cysteine 97–cysteine 122, cysteine 199–cysteine 208, and cysteine 211–cysteine 236. Over residues 247 to 262 the composition is skewed to pro residues; it reads PPPPPPPPPPPPPPPQ. Positions 247 to 274 are disordered; it reads PPPPPPPPPPPPPPPQRLYGENDTPSSD.

Belongs to the cysteine-rich repeat secretory protein family.

Its subcellular location is the secreted. The chain is Cysteine-rich repeat secretory protein 1 (CRRSP1) from Arabidopsis thaliana (Mouse-ear cress).